A 98-amino-acid chain; its full sequence is UPF0213 protein BPUM_0019 (98 aa).

A GIY-YIG domain is found at 4-79; it reads HNHYFYVLKC…KTWTRKKKDL (76 aa).

This sequence belongs to the UPF0213 family.

This Bacillus pumilus (strain SAFR-032) protein is UPF0213 protein BPUM_0019.